The primary structure comprises 207 residues: Phenazine biosynthesis protein PhzD (207 aa).

Asp38 (proton donor) is an active-site residue. Residues Gln78, Arg87, Lys122, and 151–155 (YAHVG) each bind substrate.

It belongs to the isochorismatase family. As to quaternary structure, homodimer.

The enzyme catalyses (2S)-2-amino-4-deoxychorismate + H2O = (5S,6S)-6-amino-5-hydroxycyclohexa-1,3-diene-1-carboxyate + pyruvate. It participates in antibiotic biosynthesis; phenazine biosynthesis. Involved in the biosynthesis of the antibiotic phenazine, a nitrogen-containing heterocyclic molecule having important roles in virulence, competition and biological control. Catalyzes the hydrolysis of the vinyl ether functional group of 2-amino-2-deoxyisochorismate (ADIC), yielding pyruvate and trans-2,3-dihydro-3-hydroxyanthranilic acid (DHHA). The protein is Phenazine biosynthesis protein PhzD of Pseudomonas fluorescens.